Reading from the N-terminus, the 449-residue chain is Tubulin alpha chain (449 aa).

GTP contacts are provided by Gln-11, Glu-71, Ser-140, Gly-144, Thr-145, Thr-179, Asn-206, and Asn-228. A Mg(2+)-binding site is contributed by Glu-71. Residue Glu-254 is part of the active site.

This sequence belongs to the tubulin family. In terms of assembly, dimer of alpha and beta chains. A typical microtubule is a hollow water-filled tube with an outer diameter of 25 nm and an inner diameter of 15 nM. Alpha-beta heterodimers associate head-to-tail to form protofilaments running lengthwise along the microtubule wall with the beta-tubulin subunit facing the microtubule plus end conferring a structural polarity. Microtubules usually have 13 protofilaments but different protofilament numbers can be found in some organisms and specialized cells. The cofactor is Mg(2+).

It is found in the cytoplasm. Its subcellular location is the cytoskeleton. The catalysed reaction is GTP + H2O = GDP + phosphate + H(+). Functionally, tubulin is the major constituent of microtubules, a cylinder consisting of laterally associated linear protofilaments composed of alpha- and beta-tubulin heterodimers. Microtubules grow by the addition of GTP-tubulin dimers to the microtubule end, where a stabilizing cap forms. Below the cap, tubulin dimers are in GDP-bound state, owing to GTPase activity of alpha-tubulin. The chain is Tubulin alpha chain (TUBA) from Sordaria macrospora (strain ATCC MYA-333 / DSM 997 / K(L3346) / K-hell).